Reading from the N-terminus, the 317-residue chain is Melanocyte-stimulating hormone receptor (317 aa).

The Extracellular segment spans residues 1-37; the sequence is MSVQGPQRRLLGSLNSTSPAAPRLGLAANQTGPRCLE. 2 N-linked (GlcNAc...) asparagine glycosylation sites follow: Asn15 and Asn29. A helical transmembrane segment spans residues 38–63; sequence VSVPDGLFLSLGLVSVVENVLVVAAI. The Cytoplasmic portion of the chain corresponds to 64 to 72; that stretch reads AKNRNLHSP. The helical transmembrane segment at 73-93 threads the bilayer; sequence MYYFICCLAVSDLLVSVSSVL. The Extracellular portion of the chain corresponds to 94–118; the sequence is ETAVMLLLEAGTLAGRAAVVQQLDD. Residues 119–140 traverse the membrane as a helical segment; that stretch reads VIDVLVCGAMVSSLCFLGAIAV. The Cytoplasmic portion of the chain corresponds to 141–163; that stretch reads DRYISIFYALRYHSIVTLPRAWR. A helical transmembrane segment spans residues 164-183; the sequence is AISAIWVASVLSSTLFIAYY. At 184–191 the chain is on the extracellular side; the sequence is DHTAVLLC. The chain crosses the membrane as a helical span at residues 192-211; the sequence is LVSFFVAMLVLMAVLYVHML. Residues 212–240 lie on the Cytoplasmic side of the membrane; it reads ARACQHARGIARLHKRQRPVHQGLGLKGA. A helical membrane pass occupies residues 241–266; that stretch reads ATLTILLGIFFLCWGPFFLHLSLMVL. The Extracellular segment spans residues 267 to 279; that stretch reads CPRHPICGCVFKN. A helical transmembrane segment spans residues 280-300; the sequence is FNLFLTLIICNSIVDPLIYAF. At 301–317 the chain is on the cytoplasmic side; the sequence is RSQELRKTLQEVLLCSW. Residue Cys315 is the site of S-palmitoyl cysteine attachment.

It belongs to the G-protein coupled receptor 1 family. As to quaternary structure, interacts with MGRN1, but does not undergo MGRN1-mediated ubiquitination; this interaction competes with GNAS-binding and thus inhibits agonist-induced cAMP production. Interacts with OPN3; the interaction results in a decrease in MC1R-mediated cAMP signaling and ultimately a decrease in melanin production in melanocytes.

It localises to the cell membrane. Functionally, receptor for MSH (alpha, beta and gamma) and ACTH. The activity of this receptor is mediated by G proteins which activate adenylate cyclase. Mediates melanogenesis, the production of eumelanin (black/brown) and phaeomelanin (red/yellow), via regulation of cAMP signaling in melanocytes. The sequence is that of Melanocyte-stimulating hormone receptor (MC1R) from Panthera onca (Jaguar).